The following is a 337-amino-acid chain: Heme A synthase (337 aa).

5 helical membrane-spanning segments follow: residues 6-26 (ITKWLCINCIMVIATIVIGGI), 87-107 (FIHRLLGRITALIYIVPVIYF), 119-139 (LPYIIALLLFCVQGFIGWYMV), 154-174 (LAFHLIIAVIIYHILFYQLIK), and 192-212 (LIFSGIAITVVYVQIFLGALV). Histidine 256 contacts heme. Transmembrane regions (helical) follow at residues 258 to 278 (LVGYSVFLVVVVLIICLLKIE), 285 to 305 (IAYFLMIALFMQVSTGIITLL), and 308 to 328 (VPIIIASIHQLFAIILLSVII). A heme-binding site is contributed by histidine 316.

Belongs to the COX15/CtaA family. Type 2 subfamily. As to quaternary structure, interacts with CtaB. Heme b serves as cofactor.

The protein resides in the cell membrane. The enzyme catalyses Fe(II)-heme o + 2 A + H2O = Fe(II)-heme a + 2 AH2. The protein operates within porphyrin-containing compound metabolism; heme A biosynthesis; heme A from heme O: step 1/1. Catalyzes the conversion of heme O to heme A by two successive hydroxylations of the methyl group at C8. The first hydroxylation forms heme I, the second hydroxylation results in an unstable dihydroxymethyl group, which spontaneously dehydrates, resulting in the formyl group of heme A. In Rickettsia rickettsii (strain Iowa), this protein is Heme A synthase.